The following is a 200-amino-acid chain: Small ribosomal subunit protein mS26 (200 aa).

The N-terminal 27 residues, 1–27 (MLRALNRLAARPGGQPPTLLLLPVRGR), are a transit peptide targeting the mitochondrion. N6-acetyllysine is present on lysine 159.

Belongs to the mitochondrion-specific ribosomal protein mS26 family. In terms of assembly, component of the mitochondrial ribosome small subunit (28S) which comprises a 12S rRNA and about 30 distinct proteins.

The protein localises to the mitochondrion. This is Small ribosomal subunit protein mS26 (Mrps26) from Rattus norvegicus (Rat).